The chain runs to 387 residues: Cytochrome b (387 aa).

8 consecutive transmembrane segments (helical) span residues 32-52 (FGFFSLVCLIIQLVSGILLAM), 76-98 (WLLRYVHANGASFFFIVVYVHML), 113-133 (LWVSGVVIFLLLIITGFLGYV), 179-199 (FFSLHYLCPFIIVGLVGLHII), 225-245 (FTIKDLFSFMIFLVLFFAFVF), 290-310 (LGVLALVLAIVVLAFLPFLTI), 325-345 (LFWSFLALCFFLGFLGSQPAA), and 353-373 (LYSTILYFVYILVLFPYIYMV). The heme b site is built by histidine 82 and histidine 96. Positions 183 and 197 each coordinate heme b.

It belongs to the cytochrome b family. In terms of assembly, the main subunits of complex b-c1 are: cytochrome b, cytochrome c1 and the Rieske protein. It depends on heme b as a cofactor.

The protein localises to the mitochondrion inner membrane. Component of the ubiquinol-cytochrome c reductase complex (complex III or cytochrome b-c1 complex) that is part of the mitochondrial respiratory chain. The b-c1 complex mediates electron transfer from ubiquinol to cytochrome c. Contributes to the generation of a proton gradient across the mitochondrial membrane that is then used for ATP synthesis. This is Cytochrome b (cytB) from Dictyostelium citrinum (Slime mold).